The primary structure comprises 384 residues: Inactive lipoate--protein ligase 2 (384 aa).

The BPL/LPL catalytic domain maps to asparagine 79–asparagine 303.

It is found in the mitochondrion. The protein resides in the plastid. Its subcellular location is the apicoplast. In the mitochondrion and together with LipL1, involved in the lipoylation of the E2 component of the branched chain alpha-ketoacid dehydrogenase complex BCKDH-E2/BCDH and the E2 component of the alpha -ketoglutarate dehydrogenase complex KDH. LipL1 is responsible for catalysing the activation of lipoate, forming lipoyl-AMP while LipL2 is required but is not capable of catalyzing this reaction. Although its role is unclear, it may catalyze the transfer of lipoyl groups from lipoyl-AMP to BCDH and KDH or act as an effector protein. This Plasmodium falciparum (isolate 3D7) protein is Inactive lipoate--protein ligase 2.